The following is a 175-amino-acid chain: Cell number regulator 9 (175 aa).

Transmembrane regions (helical) follow at residues 53 to 73 (GLCC…AEIV) and 80 to 100 (CGVA…HWIY).

The protein belongs to the cornifelin family. In terms of tissue distribution, expressed in roots, coleoptiles, leaves and stalks.

The protein resides in the membrane. This Zea mays (Maize) protein is Cell number regulator 9 (CNR9).